A 185-amino-acid chain; its full sequence is Translocon-associated protein subunit gamma (185 aa).

M1 carries the N-acetylmethionine modification. Over 1–27 (MAPKGGPKQQSEEDLLLQDFSRNLSAK) the chain is Lumenal. S11 carries the post-translational modification Phosphoserine. The helical transmembrane segment at 28-48 (SSALFFGNAFIVSAIPIWLYW) threads the bilayer. The Cytoplasmic segment spans residues 49–54 (RIWHMD). Residues 55 to 76 (LIQSAVLYSVMTLVSTYLVAFA) traverse the membrane as a helical segment. The Lumenal segment spans residues 77 to 135 (YKNVKFVLKHKVAQKREDAVSKEVTRKLSEADNRKMSRKEKDERILWKKNEVADYEATT). S105 carries the phosphoserine modification. A helical transmembrane segment spans residues 136 to 157 (FSIFYNNTLFLVLVIVASFFIL). Topologically, residues 158–163 (KNFNPT) are cytoplasmic. A helical transmembrane segment spans residues 164–184 (VNYILSISASSGLIALLSTGS).

It belongs to the TRAP-gamma family. Heterotetramer of TRAP-alpha, TRAP-beta, TRAP-delta and TRAP-gamma.

The protein resides in the endoplasmic reticulum membrane. Functionally, TRAP proteins are part of a complex whose function is to bind calcium to the ER membrane and thereby regulate the retention of ER resident proteins. This chain is Translocon-associated protein subunit gamma (SSR3), found in Bos taurus (Bovine).